The sequence spans 535 residues: SIR4-interacting protein SIF2 (535 aa).

The region spanning 4–36 (TSEELNYLIWRYCQEMGHEVSALALQDETRVLE) is the LisH domain. Residues 104 to 140 (EGRFTLETNSESNKAGEDGASTVERETQEDDTNSIDS) form a disordered region. A compositionally biased stretch (acidic residues) spans 130–140 (TQEDDTNSIDS). Serine 137 bears the Phosphoserine mark. WD repeat units lie at residues 155–186 (VKLD…RLAR), 218–248 (KTTN…RLWN), 259–289 (FHRA…ILWN), 316–345 (GDGS…FVYQ), 357–387 (GHHG…RIWH), 399–428 (GHSQ…RLWS), 440–470 (VDGV…NVYD), and 503–534 (SQDN…SVVA).

In terms of assembly, homotetramer. Interacts with SIR4 N-terminal domain. Interacts with a complex composed of SIN3 and RPD3. Identified in the Set3C complex with HOS2, HST1, SNT1, CPR1, HOS4/YIL112W and SET3.

The protein resides in the nucleus. Its function is as follows. Antagonizes telomeric silencing in yeast. May recruit SIR4 to non-telomeric sites or repression. The chain is SIR4-interacting protein SIF2 (SIF2) from Saccharomyces cerevisiae (strain ATCC 204508 / S288c) (Baker's yeast).